The sequence spans 314 residues: GTPase Era (314 aa).

The region spanning 21–189 (KSGFVGIIGR…QKTLINLLEP (169 aa)) is the Era-type G domain. Residues 29–36 (GRPNVGKS) form a G1 region. 29-36 (GRPNVGKS) lines the GTP pocket. The interval 55 to 59 (QTTRN) is G2. Positions 76–79 (DTPG) are G3. Residues 76-80 (DTPGI) and 138-141 (NKSD) contribute to the GTP site. The G4 stretch occupies residues 138 to 141 (NKSD). Positions 168–170 (FSA) are G5. One can recognise a KH type-2 domain in the interval 212-296 (IREQILQQTR…YLQLFVKVEP (85 aa)).

This sequence belongs to the TRAFAC class TrmE-Era-EngA-EngB-Septin-like GTPase superfamily. Era GTPase family. In terms of assembly, monomer.

The protein localises to the cytoplasm. It is found in the cell inner membrane. An essential GTPase that binds both GDP and GTP, with rapid nucleotide exchange. Plays a role in 16S rRNA processing and 30S ribosomal subunit biogenesis and possibly also in cell cycle regulation and energy metabolism. This Rippkaea orientalis (strain PCC 8801 / RF-1) (Cyanothece sp. (strain PCC 8801)) protein is GTPase Era.